We begin with the raw amino-acid sequence, 142 residues long: Hemoglobin subunit alpha (142 aa).

One can recognise a Globin domain in the interval 2–142; that stretch reads KLSAEDKHNV…VGHVLTSKYR (141 aa). H59 contributes to the O2 binding site. H88 serves as a coordination point for heme b.

This sequence belongs to the globin family. Heterotetramer of two alpha chains and two beta chains. As to expression, red blood cells.

Functionally, involved in oxygen transport from the lung to the various peripheral tissues. This Taricha granulosa (Roughskin newt) protein is Hemoglobin subunit alpha (HBA).